The sequence spans 401 residues: Argininosuccinate synthase (401 aa).

ATP contacts are provided by residues 11–19 (AYSGGLDTS) and Ala-38. Tyr-89 and Ser-94 together coordinate L-citrulline. Gly-119 provides a ligand contact to ATP. Residues Thr-121, Asn-125, and Asp-126 each coordinate L-aspartate. Position 125 (Asn-125) interacts with L-citrulline. L-citrulline-binding residues include Arg-129, Ser-177, Ser-186, Glu-262, and Tyr-274.

The protein belongs to the argininosuccinate synthase family. Type 1 subfamily. As to quaternary structure, homotetramer.

Its subcellular location is the cytoplasm. The catalysed reaction is L-citrulline + L-aspartate + ATP = 2-(N(omega)-L-arginino)succinate + AMP + diphosphate + H(+). Its pathway is amino-acid biosynthesis; L-arginine biosynthesis; L-arginine from L-ornithine and carbamoyl phosphate: step 2/3. The protein is Argininosuccinate synthase of Nitratidesulfovibrio vulgaris (strain DSM 19637 / Miyazaki F) (Desulfovibrio vulgaris).